The sequence spans 567 residues: Proton-coupled zinc antiporter SLC30A9, mitochondrial (567 aa).

The next 5 membrane-spanning stretches (helical) occupy residues 238 to 258 (VVMV…LAWI), 313 to 333 (GVGI…MGLL), 341 to 361 (LLWA…TLLV), 391 to 411 (VILL…TCMG), and 423 to 443 (SLGS…LIYT). An LXXLL motif motif is present at residues 461 to 465 (LTELL).

It belongs to the cation diffusion facilitator (CDF) transporter (TC 2.A.4) family. SLC30A subfamily. As to quaternary structure, interacts with GRIP1, ESR1, AR and CTNNB1.

The protein resides in the mitochondrion membrane. It localises to the nucleus. The protein localises to the endoplasmic reticulum. It carries out the reaction Zn(2+)(in) + 2 H(+)(out) = Zn(2+)(out) + 2 H(+)(in). Acts as a zinc transporter involved in intracellular zinc homeostasis. Functions as a secondary coactivator for nuclear receptors by cooperating with p160 coactivators subtypes. Plays a role in transcriptional activation of Wnt-responsive genes. Functionally, mitochondrial proton-coupled zinc ion antiporter mediating the export of zinc from the mitochondria and involved in zinc homeostasis, zinc mobilization as well as mitochondrial morphology and health. In nucleus, functions as a secondary coactivator for nuclear receptors by cooperating with p160 coactivators subtypes. Plays a role in transcriptional activation of Wnt-responsive genes. This Mus musculus (Mouse) protein is Proton-coupled zinc antiporter SLC30A9, mitochondrial (Slc30a9).